The chain runs to 458 residues: Phosphoglucosamine mutase (458 aa).

Ser-100 serves as the catalytic Phosphoserine intermediate. 4 residues coordinate Mg(2+): Ser-100, Asp-239, Asp-241, and Asp-243. Residue Ser-100 is modified to Phosphoserine.

This sequence belongs to the phosphohexose mutase family. Mg(2+) serves as cofactor. Post-translationally, activated by phosphorylation.

The catalysed reaction is alpha-D-glucosamine 1-phosphate = D-glucosamine 6-phosphate. Functionally, catalyzes the conversion of glucosamine-6-phosphate to glucosamine-1-phosphate. This is Phosphoglucosamine mutase from Dictyoglomus thermophilum (strain ATCC 35947 / DSM 3960 / H-6-12).